Consider the following 432-residue polypeptide: Pachytene checkpoint protein 2 homolog (432 aa).

179–186 (GPPGTGKT) is a binding site for ATP.

This sequence belongs to the AAA ATPase family. PCH2 subfamily.

Functionally, plays a key role in chromosome recombination and chromosome structure development during meiosis. Required at early steps in meiotic recombination that leads to non-crossovers pathways. Also needed for efficient completion of homologous synapsis by influencing crossover distribution along the chromosomes affecting both crossovers and non-crossovers pathways. The protein is Pachytene checkpoint protein 2 homolog (trip13) of Xenopus tropicalis (Western clawed frog).